A 154-amino-acid chain; its full sequence is 6,7-dimethyl-8-ribityllumazine synthase (154 aa).

Residues 22–23 (FN), 56–58 (AFE), and 80–82 (TVI) contribute to the 5-amino-6-(D-ribitylamino)uracil site. (2S)-2-hydroxy-3-oxobutyl phosphate is bound at residue 85-86 (AT). The Proton donor role is filled by histidine 88. Phenylalanine 113 serves as a coordination point for 5-amino-6-(D-ribitylamino)uracil. Arginine 127 provides a ligand contact to (2S)-2-hydroxy-3-oxobutyl phosphate.

This sequence belongs to the DMRL synthase family. Forms an icosahedral capsid composed of 60 subunits, arranged as a dodecamer of pentamers. Can interact with riboflavin synthase, forming a lumazine synthase/riboflavin synthase complex, also designated as 'heavy riboflavin synthase complex', which consists of a trimer of riboflavin synthase enclosed within the icosahedral structure composed of 60 subunits of 6,7-dimethyl-8-ribityllumazine synthase.

It carries out the reaction (2S)-2-hydroxy-3-oxobutyl phosphate + 5-amino-6-(D-ribitylamino)uracil = 6,7-dimethyl-8-(1-D-ribityl)lumazine + phosphate + 2 H2O + H(+). It functions in the pathway cofactor biosynthesis; riboflavin biosynthesis; riboflavin from 2-hydroxy-3-oxobutyl phosphate and 5-amino-6-(D-ribitylamino)uracil: step 1/2. Catalyzes the formation of 6,7-dimethyl-8-ribityllumazine by condensation of 5-amino-6-(D-ribitylamino)uracil with 3,4-dihydroxy-2-butanone 4-phosphate. This is the penultimate step in the biosynthesis of riboflavin. Is able to use the non-natural R enantiomer of 3,4-dihydroxy-2-butanone 4-phosphate as a substrate, but with less efficiency than the natural S enantiomer. Cannot use unphosphorylated 3,4-dihydroxy-2-butanone, 3,4-dihydroxy-2-butanone 3-phosphate or diacetyl as substrates. The polypeptide is 6,7-dimethyl-8-ribityllumazine synthase (ribH) (Bacillus subtilis (strain 168)).